The following is a 40-amino-acid chain: Cell division inhibitor MciZ (40 aa).

In terms of assembly, interacts with FtsZ. Binds to the C-terminal polymerization interface of FtsZ. Binds to FtsZ filaments.

With respect to regulation, highly effective in inhibiting polymerization at low and intermediate concentrations of GTP and only partially effective at high GTP concentrations. Its function is as follows. Blocks Z-ring formation in the mother cell during sporulation by inhibiting the polymerization of FtsZ. Binds to the minus end of FtsZ and functions as a filament-capping protein. At high concentrations, is capable of both capping and sequestration of FtsZ. Decreases the GTPase activity of FtsZ. This Bacillus subtilis (strain 168) protein is Cell division inhibitor MciZ.